Reading from the N-terminus, the 176-residue chain is ATP synthase subunit delta (176 aa).

The protein belongs to the ATPase delta chain family. In terms of assembly, F-type ATPases have 2 components, F(1) - the catalytic core - and F(0) - the membrane proton channel. F(1) has five subunits: alpha(3), beta(3), gamma(1), delta(1), epsilon(1). F(0) has three main subunits: a(1), b(2) and c(10-14). The alpha and beta chains form an alternating ring which encloses part of the gamma chain. F(1) is attached to F(0) by a central stalk formed by the gamma and epsilon chains, while a peripheral stalk is formed by the delta and b chains.

Its subcellular location is the cell inner membrane. In terms of biological role, f(1)F(0) ATP synthase produces ATP from ADP in the presence of a proton or sodium gradient. F-type ATPases consist of two structural domains, F(1) containing the extramembraneous catalytic core and F(0) containing the membrane proton channel, linked together by a central stalk and a peripheral stalk. During catalysis, ATP synthesis in the catalytic domain of F(1) is coupled via a rotary mechanism of the central stalk subunits to proton translocation. This protein is part of the stalk that links CF(0) to CF(1). It either transmits conformational changes from CF(0) to CF(1) or is implicated in proton conduction. This Polaromonas sp. (strain JS666 / ATCC BAA-500) protein is ATP synthase subunit delta.